The primary structure comprises 498 residues: Lysine--tRNA ligase (498 aa).

The Mg(2+) site is built by glutamate 408 and glutamate 415.

It belongs to the class-II aminoacyl-tRNA synthetase family. As to quaternary structure, homodimer. Requires Mg(2+) as cofactor.

Its subcellular location is the cytoplasm. It catalyses the reaction tRNA(Lys) + L-lysine + ATP = L-lysyl-tRNA(Lys) + AMP + diphosphate. This chain is Lysine--tRNA ligase, found in Listeria monocytogenes serovar 1/2a (strain ATCC BAA-679 / EGD-e).